Reading from the N-terminus, the 127-residue chain is Large ribosomal subunit protein bL17 (127 aa).

It belongs to the bacterial ribosomal protein bL17 family. Part of the 50S ribosomal subunit. Contacts protein L32.

In Lactiplantibacillus plantarum (strain ATCC BAA-793 / NCIMB 8826 / WCFS1) (Lactobacillus plantarum), this protein is Large ribosomal subunit protein bL17.